Here is a 264-residue protein sequence, read N- to C-terminus: Tryptophan synthase alpha chain (264 aa).

Residues Glu-49 and Asp-60 each act as proton acceptor in the active site.

The protein belongs to the TrpA family. In terms of assembly, tetramer of two alpha and two beta chains.

The enzyme catalyses (1S,2R)-1-C-(indol-3-yl)glycerol 3-phosphate + L-serine = D-glyceraldehyde 3-phosphate + L-tryptophan + H2O. Its pathway is amino-acid biosynthesis; L-tryptophan biosynthesis; L-tryptophan from chorismate: step 5/5. Functionally, the alpha subunit is responsible for the aldol cleavage of indoleglycerol phosphate to indole and glyceraldehyde 3-phosphate. The protein is Tryptophan synthase alpha chain of Lachnospira eligens (strain ATCC 27750 / DSM 3376 / VPI C15-48 / C15-B4) (Eubacterium eligens).